A 363-amino-acid chain; its full sequence is Protein-arginine kinase (363 aa).

The region spanning 24–255 (IVLSSRIRLA…QQLIAQERAA (232 aa)) is the Phosphagen kinase C-terminal domain. Residues 27 to 31 (SSRIR), H92, R126, 177 to 181 (RASVM), and 208 to 213 (RGTYGE) each bind ATP. Positions 338–343 (RDVRRA) match the RDXXRA motif of the pArg binding pocket involved in allosteric regulation motif.

It belongs to the ATP:guanido phosphotransferase family.

The enzyme catalyses L-arginyl-[protein] + ATP = N(omega)-phospho-L-arginyl-[protein] + ADP + H(+). Its activity is regulated as follows. Appears to be allosterically activated by the binding of pArg-containing polypeptides to the pArg-binding pocket localized in the C-terminal domain of McsB. In terms of biological role, catalyzes the specific phosphorylation of arginine residues in a large number of proteins. Is part of the bacterial stress response system. Protein arginine phosphorylation has a physiologically important role and is involved in the regulation of many critical cellular processes, such as protein homeostasis, motility, competence, and stringent and stress responses, by regulating gene expression and protein activity. The protein is Protein-arginine kinase of Geobacillus thermodenitrificans (strain NG80-2).